Here is a 469-residue protein sequence, read N- to C-terminus: D-3-phosphoglycerate dehydrogenase 2 (469 aa).

At S2 the chain carries N-acetylserine. Phosphoserine occurs at positions 22, 29, and 33. Residues 208-209, D228, 285-287, and D311 each bind NAD(+); these read HI and ASR. R287 is a catalytic residue. Residue E316 is part of the active site. H347 (proton donor) is an active-site residue. Residue 347-350 participates in NAD(+) binding; the sequence is HIGG. One can recognise an ACT domain in the interval 399–469; the sequence is RVLYIHRNVP…SAKVSIRLLY (71 aa).

The protein belongs to the D-isomer specific 2-hydroxyacid dehydrogenase family.

It catalyses the reaction (2R)-3-phosphoglycerate + NAD(+) = 3-phosphooxypyruvate + NADH + H(+). The enzyme catalyses (R)-2-hydroxyglutarate + NAD(+) = 2-oxoglutarate + NADH + H(+). The protein operates within amino-acid biosynthesis; L-serine biosynthesis; L-serine from 3-phospho-D-glycerate: step 1/3. Its function is as follows. Catalyzes the reversible oxidation of 3-phospho-D-glycerate to 3-phosphonooxypyruvate, the first step of the phosphorylated L-serine biosynthesis pathway. Also catalyzes the reversible oxidation of 2-hydroxyglutarate to 2-oxoglutarate. The polypeptide is D-3-phosphoglycerate dehydrogenase 2 (SER33) (Saccharomyces cerevisiae (strain ATCC 204508 / S288c) (Baker's yeast)).